A 292-amino-acid chain; its full sequence is MKDRLQELKQKTKEIELSRDGQVFVEEEQGVLVQQAVIYEREPVAERHLHEIQKLQENINSFVDDVQRFGQQQKSLVASMRRFSLLKRDSTIAKEIKIQAEHINRALGDVVKEVKKSEVENGPSSVVTRILKSQYAAMFRRFQQTMFLYNDTIALKQEKCKTFIVRQLEVAGKEVSEEEVNDMLHHGKWEVFNESLLTETSITKAQLSEIEQRHKELVNLENQVKDLRDLFIQISLLVEEQGESINSIEVMVNSTKDYVNNTKEKFGLAVKYKKRNPCRALCCCCCPRCGSK.

Positions 207–269 (LSEIEQRHKE…NNTKEKFGLA (63 aa)) constitute a t-SNARE coiled-coil homology domain.

Belongs to the syntaxin family. Interacts with EGFR. Expressed in stomach, lung and skin (at protein level). In stomach, strongly expressed in the mucosa of the fundus, in epithelial cells of gastric pits, and in gastric glands (at protein level). In skin, expressed in the epidermis, dermis, and epithelial layer of the hair bulb (at protein level).

The protein resides in the cell membrane. It is found in the cytoplasm. In terms of biological role, plays a role in endosomal trafficking of the epidermal growth factor receptor (EGFR). The chain is Syntaxin-19 from Mus musculus (Mouse).